We begin with the raw amino-acid sequence, 143 residues long: Histone H2B.2, sperm (143 aa).

Residues 1 to 49 (MPKSPSKSSPRKGSPRKGSPRKGSPKRGGKGAKRAGKGGRRNVVKRRRR) form a disordered region. 5 short sequence motifs (SPKK motif) span residues 4 to 7 (SPSK), 9 to 12 (SPRK), 14 to 17 (SPRK), 19 to 22 (SPRK), and 24 to 27 (SPKR). Residues 9–49 (SPRKGSPRKGSPRKGSPKRGGKGAKRAGKGGRRNVVKRRRR) are compositionally biased toward basic residues. A phosphoserine mark is found at Ser14, Ser19, and Ser24. The O-linked (GlcNAc) serine glycan is linked to Ser129. Lys137 is covalently cross-linked (Glycyl lysine isopeptide (Lys-Gly) (interchain with G-Cter in ubiquitin)).

Belongs to the histone H2B family. As to quaternary structure, the nucleosome is a histone octamer containing two molecules each of H2A, H2B, H3 and H4 assembled in one H3-H4 heterotetramer and two H2A-H2B heterodimers. The octamer wraps approximately 147 bp of DNA. Post-translationally, monoubiquitination of Lys-137 gives a specific tag for epigenetic transcriptional activation and is also prerequisite for histone H3 'Lys-4' and 'Lys-79' methylation. In terms of processing, phosphorylated on SPKK motifs 3, 4 and 5; which may regulate DNA binding. Dephosphorylated during maturation of spermatids to mature sperm and rephosphorylated at fertilization. GlcNAcylation at Ser-129 promotes monoubiquitination of Lys-137. It fluctuates in response to extracellular glucose, and associates with transcribed genes.

The protein resides in the nucleus. Its subcellular location is the chromosome. Functionally, core component of nucleosome. Nucleosomes wrap and compact DNA into chromatin, limiting DNA accessibility to the cellular machineries which require DNA as a template. Histones thereby play a central role in transcription regulation, DNA repair, DNA replication and chromosomal stability. DNA accessibility is regulated via a complex set of post-translational modifications of histones, also called histone code, and nucleosome remodeling. The sequence is that of Histone H2B.2, sperm from Psammechinus miliaris (Green sea urchin).